The sequence spans 446 residues: N-succinylarginine dihydrolase (446 aa).

Residues 19-28 (AGLSFGNEAS), Asn-110, and 137-138 (HR) each bind substrate. Residue Glu-174 is part of the active site. Arg-213 serves as a coordination point for substrate. His-249 is a catalytic residue. Asp-251 and Asn-364 together coordinate substrate. Cys-370 functions as the Nucleophile in the catalytic mechanism.

The protein belongs to the succinylarginine dihydrolase family. In terms of assembly, homodimer.

It carries out the reaction N(2)-succinyl-L-arginine + 2 H2O + 2 H(+) = N(2)-succinyl-L-ornithine + 2 NH4(+) + CO2. The protein operates within amino-acid degradation; L-arginine degradation via AST pathway; L-glutamate and succinate from L-arginine: step 2/5. Functionally, catalyzes the hydrolysis of N(2)-succinylarginine into N(2)-succinylornithine, ammonia and CO(2). The protein is N-succinylarginine dihydrolase of Serratia proteamaculans (strain 568).